A 480-amino-acid chain; its full sequence is Speriolin (480 aa).

The interval 1–76 is necessary for targeting to centrosomes; that stretch reads MSLLTSYEGL…HQGVFLPPAS (76 aa). Residues 2-45 adopt a coiled-coil conformation; it reads SLLTSYEGLRHQIERLVRENEELKKLVRLIRENQELKSAIKTQA. Disordered regions lie at residues 252–297 and 305–324; these read INNI…SRVM and VEME…DNPR.

It belongs to the speriolin family. As to quaternary structure, found in a complex with CDC20, CDC27 and TUBG1. Interacts with CDC20. In terms of tissue distribution, expressed in testis. Expressed in pachyten spermatocytes, spermatids and epididymal sperm (at protein level).

Its subcellular location is the cytoplasm. It localises to the cytoskeleton. The protein resides in the microtubule organizing center. It is found in the centrosome. The protein is Speriolin (Spatc1) of Mus musculus (Mouse).